Reading from the N-terminus, the 320-residue chain is GPI-specific phospholipase A2-like PGAP3 (320 aa).

An N-terminal signal peptide occupies residues 1–20; it reads MAGLAARLVLLAGAAALASG. Residues 21–98 lie on the Lumenal side of the membrane; it reads SQGDREPVYR…QFHGKWPFSR (78 aa). The N-linked (GlcNAc...) asparagine glycan is linked to asparagine 40. The chain crosses the membrane as a helical span at residues 99–119; sequence FLFFQEPASAVASFLNGLASL. The Cytoplasmic segment spans residues 120-135; the sequence is VMLCRYRTFVPASSPM. Residues 136–156 traverse the membrane as a helical segment; it reads YHTCVAFAWVSLNAWFWSTVF. Residues 157 to 169 lie on the Lumenal side of the membrane; that stretch reads HTRDTDLTEKMDY. A helical transmembrane segment spans residues 170 to 190; the sequence is FCASTVILHSIYLCCVRTVGL. Residues 191-193 are Cytoplasmic-facing; it reads QHP. Residues 194–214 traverse the membrane as a helical segment; sequence AVVSAFRALLLLMLTVHVSYL. Residues 215–224 are Lumenal-facing; the sequence is SLIRFDYGYN. Residues 225–245 traverse the membrane as a helical segment; it reads LVANVAIGLVNVVWWLAWCLW. Residues 246–257 are Cytoplasmic-facing; sequence NQRRLPHVRKCV. Residues 258 to 278 form a helical membrane-spanning segment; it reads VVVLLLQGLSLLELLDFPPLF. Position 279 (tryptophan 279) is a topological domain, lumenal. Residues 280–299 form a helical membrane-spanning segment; it reads VLDAHAIWHISTIPVHVLFF. The Cytoplasmic portion of the chain corresponds to 300 to 320; the sequence is SFLEDDSLYLLKESEDKFKLD.

It belongs to the PGAP3 family. As to expression, ubiquitously expressed, with highest levels in thyroid and placenta.

Its subcellular location is the golgi apparatus membrane. In terms of biological role, involved in the fatty acid remodeling steps of GPI-anchor maturation where the unsaturated acyl chain at sn-2 of inositol phosphate is replaced by a saturated stearoyl chain. May catalyze the first step of the fatty acid remodeling, by removing the unsaturated acyl chain at sn-2 of inositol phosphate, generating a lyso-GPI intermediate. The fatty acid remodeling steps is critical for the integration of GPI-APs into lipid rafts. The sequence is that of GPI-specific phospholipase A2-like PGAP3 from Homo sapiens (Human).